The chain runs to 102 residues: NADH-quinone oxidoreductase subunit K (102 aa).

The next 3 helical transmembrane spans lie at 5–25 (IMHYLIVSALMFTIGIAGIFL), 31–51 (IIILMSIELILLSVNLNFVAF), and 66–86 (FILTVAAAEAAIGLAILVVFF).

The protein belongs to the complex I subunit 4L family. NDH-1 is composed of 14 different subunits. Subunits NuoA, H, J, K, L, M, N constitute the membrane sector of the complex.

Its subcellular location is the cell inner membrane. It catalyses the reaction a quinone + NADH + 5 H(+)(in) = a quinol + NAD(+) + 4 H(+)(out). NDH-1 shuttles electrons from NADH, via FMN and iron-sulfur (Fe-S) centers, to quinones in the respiratory chain. The immediate electron acceptor for the enzyme in this species is believed to be ubiquinone. Couples the redox reaction to proton translocation (for every two electrons transferred, four hydrogen ions are translocated across the cytoplasmic membrane), and thus conserves the redox energy in a proton gradient. The protein is NADH-quinone oxidoreductase subunit K of Bartonella henselae (strain ATCC 49882 / DSM 28221 / CCUG 30454 / Houston 1) (Rochalimaea henselae).